Here is a 100-residue protein sequence, read N- to C-terminus: Urease subunit gamma (100 aa).

The protein belongs to the urease gamma subunit family. Heterotrimer of UreA (gamma), UreB (beta) and UreC (alpha) subunits. Three heterotrimers associate to form the active enzyme.

It is found in the cytoplasm. It carries out the reaction urea + 2 H2O + H(+) = hydrogencarbonate + 2 NH4(+). Its pathway is nitrogen metabolism; urea degradation; CO(2) and NH(3) from urea (urease route): step 1/1. This is Urease subunit gamma from Paenarthrobacter aurescens (strain TC1).